The following is a 1125-amino-acid chain: Telomerase reverse transcriptase (1125 aa).

Residues 1–234 form an RNA-interacting domain 1 region; it reads MPRAPRCRAV…ARRRRSSARG (234 aa). Residues 58 to 199 are GQ motif; that stretch reads VPWDAQPPPA…RQVGGTRAGF (142 aa). The tract at residues 137–141 is required for regulating specificity for telomeric DNA and for processivity for primer elongation; it reads WGLLL. A disordered region spans residues 186 to 308; the sequence is RRPTRQVGGT…WRLSPSEGEP (123 aa). The span at 224–243 shows a compositional bias: basic residues; sequence GARRRRSSARGRLPPAKRPR. The short motif at 226–244 is the Bipartite nuclear localization signal element; it reads RRRRSSARGRLPPAKRPRR. Serine 231 is modified (phosphoserine; by PKB/AKT1). The segment at 235 to 312 is linker; it reads RLPPAKRPRR…PSEGEPGAGA (78 aa). 2 stretches are compositionally biased toward basic and acidic residues: residues 244–253 and 269–279; these read RGLEPGRDLE and DAAEAKSRKGD. The interval 290 to 531 is required for oligomerization; it reads GERGVGSASW…VPAAEHRQRE (242 aa). The tract at residues 313–543 is RNA-interacting domain 2; sequence CAETKRFLYC…LGRFLHWLMG (231 aa). The short motif at 316 to 321 is the TFLY; involved in RNA binding element; the sequence is TKRFLY. The tract at residues 364–514 is QFP motif; the sequence is PRRPRRLPAR…MKVQDCAWLR (151 aa). The interval 385–405 is CP motif; sequence LGNHARSPYGALLRAHCPLPA. Serine 450 carries the phosphoserine; by DYRK2 modification. The region spanning 598 to 928 is the Reverse transcriptase domain; sequence EVRQHQEARP…CLFPWCGLLL (331 aa). At tyrosine 700 the chain carries Phosphotyrosine; by SRC-type Tyr-kinases. Aspartate 705, aspartate 861, and aspartate 862 together coordinate Mg(2+). Residues 907 to 921 are required for oligomerization; the sequence is LGGAAPLQLPAHCLF. Residues 923–927 are primer grip sequence; sequence WCGLL. The segment at 929-1125 is CTE; it reads DTRTLEVHGD…LTADFKTILD (197 aa).

Belongs to the reverse transcriptase family. Telomerase subfamily. Catalytic component of the telomerase holoenzyme complex composed of one molecule of TERT, one molecule of WRAP53/TCAB1, two molecules of H/ACA ribonucleoprotein complex subunits DKC1, NOP10, NHP2 and GAR1, and a telomerase RNA template component (TERC). The telomerase holoenzyme complex is associated with TEP1, SMG6/EST1A and POT1. The molecular chaperone HSP90/P23 complex is required for correct assembly and stabilization of the active telomerase. Interacts directly with HSP90A and PTGES3. Interacts with HSPA1A; the interaction occurs in the absence of TERC and dissociates once the complex has formed. Interacts with RAN; the interaction promotes nuclear export of TERT. Interacts with XPO1. Interacts with PTPN11; the interaction retains TERT in the nucleus. Interacts with NCL (via RRM1 and C-terminal RRM4/Arg/Gly-rich domains); the interaction is important for nucleolar localization of TERT. Interacts with SMARCA4 (via the bromodomain); the interaction regulates Wnt-mediated signaling. Interacts with MCRS1 (isoform MCRS2); the interaction inhibits in vitro telomerase activity. Interacts with PIF1; the interaction has no effect on the elongation activity of TERT. Interacts with PML; the interaction recruits TERT to PML bodies and inhibits telomerase activity. Interacts with GNL3L. Interacts with isoform 1 and isoform 2 of NVL. Interacts with DHX36. Interacts with ATF7. In terms of processing, phosphorylation at Tyr-700 under oxidative stress leads to translocation of TERT to the cytoplasm and reduces its antiapoptotic activity. Dephosphorylated by SHP2/PTPN11 leading to nuclear retention. Phosphorylation at Ser-231 by the AKT pathway promotes nuclear location. Phosphorylation at the G2/M phase at Ser-450 by DYRK2 promotes ubiquitination by the EDVP complex and degradation. Post-translationally, ubiquitinated by the EDVP complex, a E3 ligase complex following phosphorylation at Ser-450 by DYRK2. Ubiquitinated leads to proteasomal degradation.

Its subcellular location is the nucleus. The protein localises to the nucleolus. It is found in the nucleoplasm. It localises to the chromosome. The protein resides in the telomere. Its subcellular location is the cytoplasm. The protein localises to the PML body. It catalyses the reaction DNA(n) + a 2'-deoxyribonucleoside 5'-triphosphate = DNA(n+1) + diphosphate. In terms of biological role, telomerase is a ribonucleoprotein enzyme essential for the replication of chromosome termini in most eukaryotes. Active in progenitor and cancer cells. Inactive, or very low activity, in normal somatic cells. Catalytic component of the teleromerase holoenzyme complex whose main activity is the elongation of telomeres by acting as a reverse transcriptase that adds simple sequence repeats to chromosome ends by copying a template sequence within the RNA component of the enzyme. Catalyzes the RNA-dependent extension of 3'-chromosomal termini with the 6-nucleotide telomeric repeat unit, 5'-TTAGGG-3'. The catalytic cycle involves primer binding, primer extension and release of product once the template boundary has been reached or nascent product translocation followed by further extension. More active on substrates containing 2 or 3 telomeric repeats. Telomerase activity is regulated by a number of factors including telomerase complex-associated proteins, chaperones and polypeptide modifiers. Modulates Wnt signaling. Plays important roles in aging and antiapoptosis. The sequence is that of Telomerase reverse transcriptase (TERT) from Bos taurus (Bovine).